A 105-amino-acid chain; its full sequence is Chloroacetanilide N-alkylformylase 2, ferredoxin component (105 aa).

Residues Pro2–Asp105 form the 2Fe-2S ferredoxin-type domain. 4 residues coordinate [2Fe-2S] cluster: Cys40, Cys46, Cys49, and Cys86.

It belongs to the adrenodoxin/putidaredoxin family. In terms of assembly, the chloroacetanilide N-alkylformylase multicomponent enzyme system is composed of an oxygenase component (CndA) and an electron transfer component formed by a ferredoxin reductase (CndC1) and a ferredoxin (CndB1). In vitro, chloroacetanilide N-alkylformylase assays in which CndB1 is substituted for CndB2 demonstrate that the two enzymes possess nearly identical activities. [2Fe-2S] cluster is required as a cofactor.

In terms of biological role, component of the chloroacetanilide N-alkylformylase multicomponent enzyme system involved in the degradation of chloroacetanilide herbicides (N-alkoxyalkyl-N-chloroacetyl-substituted aniline derivatives). In vitro, functions as an intermediate electron transfer protein. The polypeptide is Chloroacetanilide N-alkylformylase 2, ferredoxin component (Rhizorhabdus wittichii (strain DC-6 / KACC 16600) (Sphingomonas wittichii)).